A 484-amino-acid chain; its full sequence is tRNA sulfurtransferase (484 aa).

A THUMP domain is found at 61 to 166; sequence PHLIELLQCI…DKLLFIQARH (106 aa). ATP is bound by residues 183–184, lysine 265, glycine 287, and glutamine 296; that span reads LI. The cysteines at positions 344 and 456 are disulfide-linked. The region spanning 404-483 is the Rhodanese domain; the sequence is LGENDVILDI…FNNVQVFVKA (80 aa). Cysteine 456 acts as the Cysteine persulfide intermediate in catalysis.

Belongs to the ThiI family.

It localises to the cytoplasm. It carries out the reaction [ThiI sulfur-carrier protein]-S-sulfanyl-L-cysteine + a uridine in tRNA + 2 reduced [2Fe-2S]-[ferredoxin] + ATP + H(+) = [ThiI sulfur-carrier protein]-L-cysteine + a 4-thiouridine in tRNA + 2 oxidized [2Fe-2S]-[ferredoxin] + AMP + diphosphate. The catalysed reaction is [ThiS sulfur-carrier protein]-C-terminal Gly-Gly-AMP + S-sulfanyl-L-cysteinyl-[cysteine desulfurase] + AH2 = [ThiS sulfur-carrier protein]-C-terminal-Gly-aminoethanethioate + L-cysteinyl-[cysteine desulfurase] + A + AMP + 2 H(+). It functions in the pathway cofactor biosynthesis; thiamine diphosphate biosynthesis. Its function is as follows. Catalyzes the ATP-dependent transfer of a sulfur to tRNA to produce 4-thiouridine in position 8 of tRNAs, which functions as a near-UV photosensor. Also catalyzes the transfer of sulfur to the sulfur carrier protein ThiS, forming ThiS-thiocarboxylate. This is a step in the synthesis of thiazole, in the thiamine biosynthesis pathway. The sulfur is donated as persulfide by IscS. This chain is tRNA sulfurtransferase, found in Actinobacillus succinogenes (strain ATCC 55618 / DSM 22257 / CCUG 43843 / 130Z).